The primary structure comprises 211 residues: MISFFFKLFQKFINYTDIPLLMATIVFVGRSNVGKSTLIYRLTGKRVRRGKRPGVTRKIIEIEWKNHKIIDMPGFGFMAGLPKEVQERIKDEIVHFIEDNASKIDVAVLVVDGKAAPEIIERWEKRGEIPIDVEFYQFLRELNIPTVVAVNKLDKIKNVQRVVHFLAEKFEVPWDEIDKTFIPISAKFGDNVEKLKNRIYEIIRERRGQRE.

Positions 21–205 (LMATIVFVGR…KNRIYEIIRE (185 aa)) constitute an EngB-type G domain. GTP-binding positions include 29 to 36 (GRSNVGKS), 54 to 58 (GVTRK), 71 to 74 (DMPG), 151 to 154 (NKLD), and 184 to 186 (ISA). Mg(2+) is bound by residues Ser-36 and Thr-56.

The protein belongs to the TRAFAC class TrmE-Era-EngA-EngB-Septin-like GTPase superfamily. EngB GTPase family. Requires Mg(2+) as cofactor.

Functionally, necessary for normal cell division and for the maintenance of normal septation. The protein is Probable GTP-binding protein EngB of Pyrococcus abyssi (strain GE5 / Orsay).